We begin with the raw amino-acid sequence, 163 residues long: Cytochrome c-type biogenesis protein CcmE (163 aa).

Over 1-8 the chain is Cytoplasmic; it reads MNPRRKKR. The helical; Signal-anchor for type II membrane protein transmembrane segment at 9 to 29 threads the bilayer; it reads LTIILAISAGLAAVIGLVLYA. The Periplasmic segment spans residues 30-163; it reads LSQNIDLFYT…TEAQLKGSKQ (134 aa). Heme is bound by residues His131 and Tyr135.

This sequence belongs to the CcmE/CycJ family.

It localises to the cell inner membrane. In terms of biological role, heme chaperone required for the biogenesis of c-type cytochromes. Transiently binds heme delivered by CcmC and transfers the heme to apo-cytochromes in a process facilitated by CcmF and CcmH. The sequence is that of Cytochrome c-type biogenesis protein CcmE from Aeromonas hydrophila subsp. hydrophila (strain ATCC 7966 / DSM 30187 / BCRC 13018 / CCUG 14551 / JCM 1027 / KCTC 2358 / NCIMB 9240 / NCTC 8049).